Here is a 369-residue protein sequence, read N- to C-terminus: Protein V (369 aa).

2 disordered regions span residues 1 to 23 (MDQD…GGRE) and 54 to 320 (INTL…GHRR). Basic and acidic residues-rich tracts occupy residues 7-20 (ISKE…EASG), 99-110 (AEAHARNVDKQN), 150-168 (GAED…RGED), and 175-193 (EEIR…RADN). S249, S257, and S260 each carry phosphoserine; by host. Residues H318, C337, C341, C353, C355, C358, C362, and C365 each coordinate Zn(2+).

The protein belongs to the paramyxoviruses V protein family. In terms of assembly, interacts with host IFIH1/MDA5 and DHX58/LGP2. Interacts with host IRF3. Interacts with host RIGI regulatory protein (via CARDs domain) and host TRIM25 (via SPRY domain); these interactions prevent TRIM25-mediated ubiquitination of RIG-I and disrupts downstream RIG-I signaling.

It localises to the host cytoplasm. In terms of biological role, plays an essential role in the inhibition of host immune response. Prevents the establishment of cellular antiviral state by blocking interferon-alpha/beta (IFN-alpha/beta) production and signaling pathway. Interacts with host IFIH1/MDA5 and DHX58/LGP2 to inhibit the transduction pathway involved in the activation of IFN-beta promoter, thus protecting the virus against cell antiviral state. Also interacts with and inhibits host IRF3. Blocks the type I interferon signaling pathway by disrupting the RIG-I signaling pathway. The polypeptide is Protein V (P/V/C) (Cavia cutleri (Guinea pig)).